A 285-amino-acid polypeptide reads, in one-letter code: Putative sugar uptake protein lp_2503 (285 aa).

9 helical membrane passes run 2 to 21 (GILI…LISG), 31 to 48 (TLGM…LWAV), 55 to 72 (SKIW…SIGQ), 112 to 134 (GNMY…LTSL), 147 to 169 (NWGV…TIVV), 179 to 196 (VVMP…IWSF), 209 to 228 (NIVT…MAMA), 233 to 255 (AVAY…YLLG), and 264 to 283 (VYVV…LSLM).

It belongs to the GRP transporter (TC 2.A.7.5) family.

It is found in the cell membrane. The chain is Putative sugar uptake protein lp_2503 from Lactiplantibacillus plantarum (strain ATCC BAA-793 / NCIMB 8826 / WCFS1) (Lactobacillus plantarum).